The sequence spans 177 residues: Large ribosomal subunit protein uL6 (177 aa).

It belongs to the universal ribosomal protein uL6 family. As to quaternary structure, part of the 50S ribosomal subunit.

In terms of biological role, this protein binds to the 23S rRNA, and is important in its secondary structure. It is located near the subunit interface in the base of the L7/L12 stalk, and near the tRNA binding site of the peptidyltransferase center. The protein is Large ribosomal subunit protein uL6 of Bradyrhizobium sp. (strain BTAi1 / ATCC BAA-1182).